A 557-amino-acid polypeptide reads, in one-letter code: MAAQGFLLIATFLLVLMVLARPLGSGLARLINDIPLPGTTGVERVLFSTLGVSDREMNWKQYLSAILGLNILGLAVLFFMLLGQHYLPLNPQQLPGLSWDLALNTAVSFVTNTNWQSYSGETTLSYFSQMAGLTVQNFLSAASGIAVIFALIRAFTRQSMNTLGNAWVDLLRITLWVLTPVALLIALFFIQQGVLQNFLPYQAVTTIEGAQQLLPMGPVASQEAIKMLGTNGGGFFNANSSHPFENPTALTNFVQMLAIFLIPTALCFAFGEVAGDRRQGRMLLWAMSVIFVICVGVVMWAEVQGNPHLLALGADSSINMEGKESRFGVLVSSLFAVVTTAASCGAVIAMHDSFTALGGMVPMWLMQIGEVVFGGVGSGLYGMMLFVLLAVFIAGLMIGRTPEYLGKKIDVREMKLTALAILVTPTLVLMGAALAMMTDAGRSAMLNPGPHGFSEVLYAVSSAANNNGSAFAGLSANSPFWNCLLALCMFVGRFGVIIPVMAIAGSLVSKKSQPASSGTLPTHGPLFVGLLIGTVLLVGALTFIPALALGPVAEYLS.

12 helical membrane-spanning segments follow: residues 5–25 (GFLL…PLGS), 63–83 (LSAI…MLLG), 132–152 (GLTV…FALI), 170–190 (LLRI…LFFI), 253–273 (FVQM…FGEV), 283–303 (LLWA…WAEV), 329–349 (VLVS…AVIA), 356–376 (ALGG…FGGV), 379–399 (GLYG…LMIG), 416–436 (LTAL…ALAM), 484–504 (LLAL…MAIA), and 526–546 (LFVG…FIPA).

This sequence belongs to the KdpA family. In terms of assembly, the system is composed of three essential subunits: KdpA, KdpB and KdpC.

It localises to the cell inner membrane. Functionally, part of the high-affinity ATP-driven potassium transport (or Kdp) system, which catalyzes the hydrolysis of ATP coupled with the electrogenic transport of potassium into the cytoplasm. This subunit binds the periplasmic potassium ions and delivers the ions to the membrane domain of KdpB through an intramembrane tunnel. The protein is Potassium-transporting ATPase potassium-binding subunit of Escherichia coli O127:H6 (strain E2348/69 / EPEC).